The sequence spans 264 residues: Acid phosphatase (264 aa).

Positions 1-28 (MIKVPRFICMIALTSGILASGLSQSVSA) are cleaved as a signal peptide.

The protein belongs to the class A bacterial acid phosphatase family. Requires Mg(2+) as cofactor. It depends on Zn(2+) as a cofactor.

The protein resides in the periplasm. The catalysed reaction is a phosphate monoester + H2O = an alcohol + phosphate. This Zymomonas mobilis subsp. mobilis (strain ATCC 31821 / ZM4 / CP4) protein is Acid phosphatase (phoC).